The following is a 240-amino-acid chain: UDP-2,3-diacylglucosamine hydrolase (240 aa).

Aspartate 8, histidine 10, aspartate 41, asparagine 79, and histidine 114 together coordinate Mn(2+). A substrate-binding site is contributed by 79 to 80 (NR). Positions 122, 160, 164, 167, and 195 each coordinate substrate. Residues histidine 195 and histidine 197 each contribute to the Mn(2+) site.

Belongs to the LpxH family. It depends on Mn(2+) as a cofactor.

It is found in the cell inner membrane. The catalysed reaction is UDP-2-N,3-O-bis[(3R)-3-hydroxytetradecanoyl]-alpha-D-glucosamine + H2O = 2-N,3-O-bis[(3R)-3-hydroxytetradecanoyl]-alpha-D-glucosaminyl 1-phosphate + UMP + 2 H(+). The protein operates within glycolipid biosynthesis; lipid IV(A) biosynthesis; lipid IV(A) from (3R)-3-hydroxytetradecanoyl-[acyl-carrier-protein] and UDP-N-acetyl-alpha-D-glucosamine: step 4/6. Hydrolyzes the pyrophosphate bond of UDP-2,3-diacylglucosamine to yield 2,3-diacylglucosamine 1-phosphate (lipid X) and UMP by catalyzing the attack of water at the alpha-P atom. Involved in the biosynthesis of lipid A, a phosphorylated glycolipid that anchors the lipopolysaccharide to the outer membrane of the cell. The polypeptide is UDP-2,3-diacylglucosamine hydrolase (Salmonella typhi).